The following is an 80-amino-acid chain: Large ribosomal subunit protein bL31B (80 aa).

This sequence belongs to the bacterial ribosomal protein bL31 family. Type B subfamily. Part of the 50S ribosomal subunit.

In Streptococcus thermophilus (strain CNRZ 1066), this protein is Large ribosomal subunit protein bL31B.